Consider the following 85-residue polypeptide: MSDGQKTKTTVDIYGQQFTIVGDESKSHMRHVASIVDDKMREINEKNPYLDINKLAVLTAVNVVHDYLKLKEELERLKGQIKEKD.

Residues 60–85 (AVNVVHDYLKLKEELERLKGQIKEKD) adopt a coiled-coil conformation.

Belongs to the ZapA family. Type 2 subfamily. As to quaternary structure, homodimer. Interacts with FtsZ.

It is found in the cytoplasm. In terms of biological role, activator of cell division through the inhibition of FtsZ GTPase activity, therefore promoting FtsZ assembly into bundles of protofilaments necessary for the formation of the division Z ring. It is recruited early at mid-cell but it is not essential for cell division. This Bacillus licheniformis (strain ATCC 14580 / DSM 13 / JCM 2505 / CCUG 7422 / NBRC 12200 / NCIMB 9375 / NCTC 10341 / NRRL NRS-1264 / Gibson 46) protein is Cell division protein ZapA.